The primary structure comprises 239 residues: UDP-2,3-diacylglucosamine hydrolase (239 aa).

Positions 8, 10, 41, 78, and 113 each coordinate Mn(2+). A substrate-binding site is contributed by 78-79 (NR). Residues D121, S159, N163, K166, and H194 each coordinate substrate. Positions 194 and 196 each coordinate Mn(2+).

The protein belongs to the LpxH family. Mn(2+) serves as cofactor.

The protein localises to the cell inner membrane. The catalysed reaction is UDP-2-N,3-O-bis[(3R)-3-hydroxytetradecanoyl]-alpha-D-glucosamine + H2O = 2-N,3-O-bis[(3R)-3-hydroxytetradecanoyl]-alpha-D-glucosaminyl 1-phosphate + UMP + 2 H(+). It functions in the pathway glycolipid biosynthesis; lipid IV(A) biosynthesis; lipid IV(A) from (3R)-3-hydroxytetradecanoyl-[acyl-carrier-protein] and UDP-N-acetyl-alpha-D-glucosamine: step 4/6. Hydrolyzes the pyrophosphate bond of UDP-2,3-diacylglucosamine to yield 2,3-diacylglucosamine 1-phosphate (lipid X) and UMP by catalyzing the attack of water at the alpha-P atom. Involved in the biosynthesis of lipid A, a phosphorylated glycolipid that anchors the lipopolysaccharide to the outer membrane of the cell. In Shewanella sp. (strain MR-4), this protein is UDP-2,3-diacylglucosamine hydrolase.